Here is a 431-residue protein sequence, read N- to C-terminus: Glucose-1-phosphate adenylyltransferase (431 aa).

Residue Lys39 participates in beta-D-fructose 1,6-bisphosphate binding. Positions 40, 46, and 52 each coordinate AMP. Tyr114 contributes to the alpha-D-glucose 1-phosphate binding site. Arg130 serves as a coordination point for AMP. Alpha-D-glucose 1-phosphate-binding positions include Gly179, 194 to 195 (EK), and Ser212. AMP contacts are provided by Glu370 and Arg386. Residues 419 to 423 (REMLR) and 429 to 431 (QER) contribute to the beta-D-fructose 1,6-bisphosphate site.

Belongs to the bacterial/plant glucose-1-phosphate adenylyltransferase family. In terms of assembly, homotetramer.

It carries out the reaction alpha-D-glucose 1-phosphate + ATP + H(+) = ADP-alpha-D-glucose + diphosphate. Its pathway is glycan biosynthesis; glycogen biosynthesis. With respect to regulation, allosterically activated by fructose-1,6-bisphosphate (F16BP) and inhibited by AMP. Functionally, involved in the biosynthesis of ADP-glucose, a building block required for the elongation reactions to produce glycogen. Catalyzes the reaction between ATP and alpha-D-glucose 1-phosphate (G1P) to produce pyrophosphate and ADP-Glc. This chain is Glucose-1-phosphate adenylyltransferase, found in Escherichia coli O45:K1 (strain S88 / ExPEC).